The primary structure comprises 383 residues: Inactive serine protease 54 (383 aa).

Residues 1–20 (MAEMRGMLLMLLYISHSSSA) form the signal peptide. The 238-residue stretch at 21–258 (ICGIQKATIA…YSDWITAKTR (238 aa)) folds into the Peptidase S1 domain. Residue Asn113 is glycosylated (N-linked (GlcNAc...) asparagine). 3 cysteine pairs are disulfide-bonded: Cys154/Cys216, Cys185/Cys195, and Cys206/Cys237. The tract at residues 305-334 (QGQRMSTKSNKQKDAGQNFRVNRQPETSGP) is disordered. The span at 323-334 (FRVNRQPETSGP) shows a compositional bias: polar residues.

The protein belongs to the peptidase S1 family. Plasma kallikrein subfamily.

The protein resides in the secreted. In Mus musculus (Mouse), this protein is Inactive serine protease 54 (Prss54).